A 345-amino-acid chain; its full sequence is Tetraacyldisaccharide 4'-kinase (345 aa).

Residue 51–58 coordinates ATP; it reads HVGGAGKT.

The protein belongs to the LpxK family.

It carries out the reaction a lipid A disaccharide + ATP = a lipid IVA + ADP + H(+). It functions in the pathway glycolipid biosynthesis; lipid IV(A) biosynthesis; lipid IV(A) from (3R)-3-hydroxytetradecanoyl-[acyl-carrier-protein] and UDP-N-acetyl-alpha-D-glucosamine: step 6/6. Functionally, transfers the gamma-phosphate of ATP to the 4'-position of a tetraacyldisaccharide 1-phosphate intermediate (termed DS-1-P) to form tetraacyldisaccharide 1,4'-bis-phosphate (lipid IVA). The protein is Tetraacyldisaccharide 4'-kinase of Bradyrhizobium sp. (strain BTAi1 / ATCC BAA-1182).